A 218-amino-acid chain; its full sequence is MYLDTKNLTASSTSALTAATASNSKSTRRMRNVWKPLSRLLKVGGKGRTAQATLAHPNNVDLNNTQQQQQQQQQELLIEDDTKSTPEESIHKYGLELRQLPEEEQVSLTQPPNTPTLISSVHVDKVSAQSCGNCQHGRNCQHRHHSSSNINSSSSSSNMNSSSATQLPSNLWDLQLPLQYISTDNGTFFWANTQDRVDDDLLHALLCQSFSQLPGTLC.

Residues 1 to 25 show a composition bias toward low complexity; that stretch reads MYLDTKNLTASSTSALTAATASNSK. Disordered regions lie at residues 1–30, 64–86, and 137–164; these read MYLDTKNLTASSTSALTAATASNSKSTRRM, NTQQQQQQQQQELLIEDDTKSTP, and GRNCQHRHHSSSNINSSSSSSNMNSSSA. A compositionally biased stretch (low complexity) spans 147 to 163; sequence SSNINSSSSSSNMNSSS.

Part of the Notch signaling pathway. This Drosophila melanogaster (Fruit fly) protein is Enhancer of split M2 protein.